The sequence spans 106 residues: MVNVPKTRRTYCKGKECRKHTQHKVTQYKAGKASLFAQGKRRYDRKQSGYGGQTKPVFHKKAKTTKKVVLRLECVVCKTKAQLALKRCKHFELGGDKKQKGQALQF.

It belongs to the eukaryotic ribosomal protein eL42 family.

This chain is Large ribosomal subunit protein eL42 (RPL44), found in Cyberlindnera jadinii (Torula yeast).